Reading from the N-terminus, the 612-residue chain is Dihydroxy-acid dehydratase (612 aa).

Residue D81 participates in Mg(2+) binding. Position 122 (C122) interacts with [2Fe-2S] cluster. D123 and K124 together coordinate Mg(2+). K124 carries the post-translational modification N6-carboxylysine. C193 provides a ligand contact to [2Fe-2S] cluster. E489 provides a ligand contact to Mg(2+). S515 acts as the Proton acceptor in catalysis.

The protein belongs to the IlvD/Edd family. In terms of assembly, homodimer. It depends on [2Fe-2S] cluster as a cofactor. Mg(2+) is required as a cofactor.

The catalysed reaction is (2R)-2,3-dihydroxy-3-methylbutanoate = 3-methyl-2-oxobutanoate + H2O. It catalyses the reaction (2R,3R)-2,3-dihydroxy-3-methylpentanoate = (S)-3-methyl-2-oxopentanoate + H2O. It functions in the pathway amino-acid biosynthesis; L-isoleucine biosynthesis; L-isoleucine from 2-oxobutanoate: step 3/4. Its pathway is amino-acid biosynthesis; L-valine biosynthesis; L-valine from pyruvate: step 3/4. Its function is as follows. Functions in the biosynthesis of branched-chain amino acids. Catalyzes the dehydration of (2R,3R)-2,3-dihydroxy-3-methylpentanoate (2,3-dihydroxy-3-methylvalerate) into 2-oxo-3-methylpentanoate (2-oxo-3-methylvalerate) and of (2R)-2,3-dihydroxy-3-methylbutanoate (2,3-dihydroxyisovalerate) into 2-oxo-3-methylbutanoate (2-oxoisovalerate), the penultimate precursor to L-isoleucine and L-valine, respectively. The chain is Dihydroxy-acid dehydratase from Pseudomonas paraeruginosa (strain DSM 24068 / PA7) (Pseudomonas aeruginosa (strain PA7)).